The sequence spans 273 residues: Orotidine 5'-phosphate decarboxylase (273 aa).

K96 functions as the Proton donor in the catalytic mechanism.

It belongs to the OMP decarboxylase family. Type 2 subfamily.

The enzyme catalyses orotidine 5'-phosphate + H(+) = UMP + CO2. It participates in pyrimidine metabolism; UMP biosynthesis via de novo pathway; UMP from orotate: step 2/2. The polypeptide is Orotidine 5'-phosphate decarboxylase (Flavobacterium johnsoniae (strain ATCC 17061 / DSM 2064 / JCM 8514 / BCRC 14874 / CCUG 350202 / NBRC 14942 / NCIMB 11054 / UW101) (Cytophaga johnsonae)).